The chain runs to 287 residues: ATP synthase gamma chain (287 aa).

This sequence belongs to the ATPase gamma chain family. In terms of assembly, F-type ATPases have 2 components, CF(1) - the catalytic core - and CF(0) - the membrane proton channel. CF(1) has five subunits: alpha(3), beta(3), gamma(1), delta(1), epsilon(1). CF(0) has three main subunits: a, b and c.

Its subcellular location is the cell inner membrane. Produces ATP from ADP in the presence of a proton gradient across the membrane. The gamma chain is believed to be important in regulating ATPase activity and the flow of protons through the CF(0) complex. This chain is ATP synthase gamma chain, found in Citrobacter koseri (strain ATCC BAA-895 / CDC 4225-83 / SGSC4696).